A 25-amino-acid polypeptide reads, in one-letter code: Caerin 1.1 (25 aa).

At Leu25 the chain carries Leucine amide.

Expressed by the skin dorsal glands.

It localises to the secreted. Antibacterial peptide with wide spectrum of activity. Active against the Gram-positive bacteria B.cereus (MIC=50 ug/ml), E.faecalis (MIC=25 ug/ml), L.lactis (MIC=1.5 ug/ml), L.innocua (MIC=25 ug/ml), S.aureus (MIC=3 ug/ml), S.epidermidis (MIC=12 ug/ml) and S.uberis (MIC=12 ug/ml), and against the Gram-negative bacteria E.coli (MIC=100 ug/ml) and P.multocida (MIC=25 ug/ml). The polypeptide is Caerin 1.1 (Litoria peronii (Emerald spotted tree frog)).